A 520-amino-acid chain; its full sequence is MKPEDFRASATRPFTGEEYLASLRDDREIYIYGDRVKDVTSHPAFRNAAASMARLYDALHDPQSKEKLCWETDTGNGGYTHKFFRYARSADELRQQRDAIAEWSRLTYGWMGRTPDYKAAFGSALGANPGFYGRFEDNAKTWYKRIQEACLYLNHAIVNPPIDRDKPVDQVKDVFISVDEEVDGGIVVSGAKVVATNSALTHYNFVGQGSAQLLGDNTDFALMFIAPMNTPGMKLICRPSYELVAGIAGSPFDYPLSSRFDENDAILVMDKVFIPWENVLIYRDFERCKQWFPQGGFGRLFPMQGCTRLAVKLDFITGALYKALQCTGSLEFRGVQAQVGEVVAWRNLFWSLTDAMYGNASEWHGGAFLPSAEALQAYRVLAPQAYPEIKKTIEQVVASGLIYLPSGVRDLHNPQLDKYLSTYCRGSGGMGHRERIKILKLLWDAIGSEFGGRHELYEINYAGSQDEIRMQALRQAIGSGAMKGMLGMVEQCMGDYDENGWTVPHLHNPDDINVLDRIRQ.

Residues 155–157 (HAI) and threonine 196 contribute to the FAD site.

It belongs to the FADH(2)-utilizing monooxygenase family. Homodimer. HPA 3-hydroxylase consists of a reductase component HpaC and an oxygenase component HpaB. Some form of interactions between the reductase and the oxygenase facilitate the transfer of FADH(-) to the oxygenase in P.aeruginosa, although interactions are not required in other species.

It carries out the reaction 4-hydroxyphenylacetate + FADH2 + O2 = 3,4-dihydroxyphenylacetate + FAD + H2O + H(+). Its pathway is aromatic compound metabolism; 4-hydroxyphenylacetate degradation; pyruvate and succinate semialdehyde from 4-hydroxyphenylacetate: step 1/7. Functionally, oxygenase component of the 4-hydroxyphenylacetate (HPA) 3-hydroxylase. Catalyzes the hydroxylation of 4-hydroxyphenylacetate to form 3,4-dihydroxyphenylacetate, using FADH(-) provided by the reductase component HpaC to activate oxygen. To a lesser extent, can also use reduced FMN. In vitro, has hydroxylation activity toward tyrosol and various cinnamic acid derivatives, catalyzing the hydroxylation of p-coumaric acid, caffeic acid, ferulic acid, and coniferaldehyde. The sequence is that of 4-hydroxyphenylacetate 3-monooxygenase oxygenase component from Pseudomonas aeruginosa (strain ATCC 15692 / DSM 22644 / CIP 104116 / JCM 14847 / LMG 12228 / 1C / PRS 101 / PAO1).